We begin with the raw amino-acid sequence, 485 residues long: Glutamate--tRNA ligase (485 aa).

A 'HIGH' region motif is present at residues 12 to 22; the sequence is PSPTGEPHVGT. Zn(2+) contacts are provided by Cys109, Cys111, Cys136, and His138. Residues 253–257 carry the 'KMSKS' region motif; it reads KLSKR. Lys256 is an ATP binding site.

The protein belongs to the class-I aminoacyl-tRNA synthetase family. Glutamate--tRNA ligase type 1 subfamily. As to quaternary structure, monomer. Requires Zn(2+) as cofactor.

The protein localises to the cytoplasm. The catalysed reaction is tRNA(Glu) + L-glutamate + ATP = L-glutamyl-tRNA(Glu) + AMP + diphosphate. In terms of biological role, catalyzes the attachment of glutamate to tRNA(Glu) in a two-step reaction: glutamate is first activated by ATP to form Glu-AMP and then transferred to the acceptor end of tRNA(Glu). The polypeptide is Glutamate--tRNA ligase (Agrobacterium fabrum (strain C58 / ATCC 33970) (Agrobacterium tumefaciens (strain C58))).